A 73-amino-acid polypeptide reads, in one-letter code: Translation initiation factor IF-1 (73 aa).

The 73-residue stretch at 1–73 (MSKKKDVIEM…TRGRITYRYK (73 aa)) folds into the S1-like domain.

The protein belongs to the IF-1 family. As to quaternary structure, component of the 30S ribosomal translation pre-initiation complex which assembles on the 30S ribosome in the order IF-2 and IF-3, IF-1 and N-formylmethionyl-tRNA(fMet); mRNA recruitment can occur at any time during PIC assembly.

Its subcellular location is the cytoplasm. One of the essential components for the initiation of protein synthesis. Stabilizes the binding of IF-2 and IF-3 on the 30S subunit to which N-formylmethionyl-tRNA(fMet) subsequently binds. Helps modulate mRNA selection, yielding the 30S pre-initiation complex (PIC). Upon addition of the 50S ribosomal subunit IF-1, IF-2 and IF-3 are released leaving the mature 70S translation initiation complex. This chain is Translation initiation factor IF-1, found in Roseiflexus castenholzii (strain DSM 13941 / HLO8).